Consider the following 99-residue polypeptide: Large ribosomal subunit protein uL23 (99 aa).

This sequence belongs to the universal ribosomal protein uL23 family. As to quaternary structure, part of the 50S ribosomal subunit. Contacts protein L29, and trigger factor when it is bound to the ribosome.

One of the early assembly proteins it binds 23S rRNA. One of the proteins that surrounds the polypeptide exit tunnel on the outside of the ribosome. Forms the main docking site for trigger factor binding to the ribosome. The protein is Large ribosomal subunit protein uL23 of Stenotrophomonas maltophilia (strain R551-3).